The primary structure comprises 135 residues: Histone H2B.4 (135 aa).

Basic and acidic residues-rich tracts occupy residues 1–12 (MAPKAAEKKPVE) and 23–35 (EKKV…GGEK). The segment at 1-43 (MAPKAAEKKPVEKTPAVKKPKAEKKVPTSKEGGEKKGKKKSKK) is disordered. K8 and K24 each carry N6-acetyllysine. A Glycyl lysine isopeptide (Lys-Gly) (interchain with G-Cter in ubiquitin) cross-link involves residue K131.

The protein belongs to the histone H2B family. As to quaternary structure, the nucleosome is a histone octamer containing two molecules each of H2A, H2B, H3 and H4 assembled in one H3-H4 heterotetramer and two H2A-H2B heterodimers. The octamer wraps approximately 147 bp of DNA. Post-translationally, can be acetylated to form H2BK6ac and H2BK33ac. In terms of processing, monoubiquitinated to form H2BK143ub1; may give a specific tag for epigenetic transcriptional activation. As to expression, expressed preferentially in meristematic tissues.

The protein resides in the nucleus. It is found in the chromosome. Its function is as follows. Core component of nucleosome. Nucleosomes wrap and compact DNA into chromatin, limiting DNA accessibility to the cellular machineries which require DNA as a template. Histones thereby play a central role in transcription regulation, DNA repair, DNA replication and chromosomal stability. DNA accessibility is regulated via a complex set of post-translational modifications of histones, also called histone code, and nucleosome remodeling. The chain is Histone H2B.4 (TH153) from Triticum aestivum (Wheat).